Reading from the N-terminus, the 221-residue chain is GTP-binding nuclear protein Ran-2 (221 aa).

Positions 10–174 (DYPSFKLVIV…LYLARKLAGD (165 aa)) constitute a Small GTPase Ran-type domain. 21 to 28 (DGGTGKTT) is a GTP binding site. Residues 40 to 48 (KKYEPTIGV) form a switch-I region. GTP-binding positions include Gly71, 125 to 128 (NKVD), and 153 to 155 (SAK). The interval 71–87 (GQEKFGGLRDGYYIHGQ) is switch-II.

It belongs to the small GTPase superfamily. Ran family. Found in a nuclear export complex with RanGTP, exportin and pre-miRNA.

It is found in the nucleus. Its function is as follows. GTP-binding protein involved in nucleocytoplasmic transport. Required for the import of protein into the nucleus and also for RNA export. Involved in chromatin condensation and control of cell cycle. The chain is GTP-binding nuclear protein Ran-2 (RAN2) from Oryza sativa subsp. indica (Rice).